A 67-amino-acid chain; its full sequence is Protein AaeX (67 aa).

A run of 2 helical transmembrane segments spans residues 3–23 (LFPV…ELLL) and 47–67 (PALF…RLFV).

Belongs to the AaeX family.

Its subcellular location is the cell membrane. The protein is Protein AaeX of Escherichia coli O157:H7.